We begin with the raw amino-acid sequence, 834 residues long: DNA-directed RNA polymerase subunit beta' (834 aa).

The segment covering methionine 1 to proline 22 has biased composition (polar residues). Residues methionine 1–glycine 45 are disordered. The span at valine 26–glycine 36 shows a compositional bias: basic and acidic residues. Cysteine 101, cysteine 103, cysteine 118, and cysteine 121 together coordinate Zn(2+). Residues aspartate 606, aspartate 608, and aspartate 610 each contribute to the Mg(2+) site.

This sequence belongs to the RNA polymerase beta' chain family. RpoC1 subfamily. As to quaternary structure, in plastids the minimal PEP RNA polymerase catalytic core is composed of four subunits: alpha, beta, beta', and beta''. When a (nuclear-encoded) sigma factor is associated with the core the holoenzyme is formed, which can initiate transcription. The cofactor is Mg(2+). Zn(2+) serves as cofactor.

The protein resides in the plastid. It is found in the chloroplast. The enzyme catalyses RNA(n) + a ribonucleoside 5'-triphosphate = RNA(n+1) + diphosphate. Functionally, DNA-dependent RNA polymerase catalyzes the transcription of DNA into RNA using the four ribonucleoside triphosphates as substrates. This Staurastrum punctulatum (Green alga) protein is DNA-directed RNA polymerase subunit beta'.